A 235-amino-acid chain; its full sequence is UPF0749 protein YlxX (235 aa).

A helical membrane pass occupies residues 6-26 (SFISISVLMVIFGLMISVQFN).

This sequence belongs to the UPF0749 family.

The protein resides in the cell membrane. The chain is UPF0749 protein YlxX (ylxX) from Bacillus subtilis (strain 168).